Reading from the N-terminus, the 538-residue chain is Phosphoenolpyruvate carboxykinase (ATP) (538 aa).

The substrate site is built by arginine 64, tyrosine 205, and lysine 211. Residues lysine 211, histidine 230, and 246 to 254 each bind ATP; that span reads GLSGTGKTT. Mn(2+)-binding residues include lysine 211 and histidine 230. Aspartate 267 serves as a coordination point for Mn(2+). ATP-binding positions include glutamate 295, arginine 331, 447–448, and threonine 453; that span reads RI. Arginine 331 contributes to the substrate binding site.

Belongs to the phosphoenolpyruvate carboxykinase (ATP) family. Monomer. Requires Mn(2+) as cofactor.

The protein resides in the cytoplasm. It catalyses the reaction oxaloacetate + ATP = phosphoenolpyruvate + ADP + CO2. It functions in the pathway carbohydrate biosynthesis; gluconeogenesis. Involved in the gluconeogenesis. Catalyzes the conversion of oxaloacetate (OAA) to phosphoenolpyruvate (PEP) through direct phosphoryl transfer between the nucleoside triphosphate and OAA. This chain is Phosphoenolpyruvate carboxykinase (ATP), found in Pasteurella multocida (strain Pm70).